A 179-amino-acid polypeptide reads, in one-letter code: Adenine phosphoribosyltransferase (179 aa).

The protein belongs to the purine/pyrimidine phosphoribosyltransferase family. In terms of assembly, homodimer.

The protein localises to the cytoplasm. It catalyses the reaction AMP + diphosphate = 5-phospho-alpha-D-ribose 1-diphosphate + adenine. Its pathway is purine metabolism; AMP biosynthesis via salvage pathway; AMP from adenine: step 1/1. Its function is as follows. Catalyzes a salvage reaction resulting in the formation of AMP, that is energically less costly than de novo synthesis. The chain is Adenine phosphoribosyltransferase from Ruegeria pomeroyi (strain ATCC 700808 / DSM 15171 / DSS-3) (Silicibacter pomeroyi).